Consider the following 338-residue polypeptide: MASGLGGLNKSPNGVVIGLAQLALPDPHTREALWAQTQKVVGMVAKARRSNPGMDLIVFPEYSLHGLSMSTAPEIMCSLDGPEVVALREACKEHRIWGCFSIMEANPQGNPFNSSLIVDDLGEIRLYYRKLHPWVPVEPWEPGDLGIPVCDGPRGSTLALIICHDGMFPEMARECAYKGADIMLRTAGYTAPIRHSWKITNQSNAFTNLMQTASVCMCGSDGTFDSMGEAMFVDFDGTIMAEGGGRADEIVCCELRPDLVREARVHWGVENNIYQFGHRGYVAVKGGARDCPYTYMRDLTAGQYRLPWENDVVHTDGRSCGFATPEREFKPTPSSWKE.

One can recognise a CN hydrolase domain in the interval 15–257 (VVIGLAQLAL…DEIVCCELRP (243 aa)). The Proton acceptor role is filled by glutamate 61. The active-site Proton donor is lysine 130. Catalysis depends on cysteine 163, which acts as the Nucleophile.

It belongs to the carbon-nitrogen hydrolase superfamily. Aliphatic amidase family.

It carries out the reaction formamide + H2O = formate + NH4(+). Its function is as follows. Is an aliphatic amidase with a restricted substrate specificity, as it only hydrolyzes formamide. The sequence is that of Formamidase from Pseudomonas syringae pv. tomato (strain ATCC BAA-871 / DC3000).